A 339-amino-acid chain; its full sequence is N-acetylornithine carbamoyltransferase (339 aa).

Carbamoyl phosphate contacts are provided by residues 49–52, tryptophan 77, and arginine 112; that span reads SMRT. Glutamate 144 contributes to the N(2)-acetyl-L-ornithine binding site. A carbamoyl phosphate-binding site is contributed by 148-151; sequence HPCQ. N(2)-acetyl-L-ornithine-binding residues include lysine 252 and leucine 295. Residue 294-295 coordinates carbamoyl phosphate; the sequence is CL. Lysine 302 is modified (N6-carboxylysine). Position 322 (arginine 322) interacts with carbamoyl phosphate.

Belongs to the aspartate/ornithine carbamoyltransferase superfamily. AOTCase family. In terms of assembly, homotrimer.

The protein localises to the cytoplasm. The catalysed reaction is N(2)-acetyl-L-ornithine + carbamoyl phosphate = N(2)-acetyl-L-citrulline + phosphate + H(+). It participates in amino-acid biosynthesis; L-arginine biosynthesis. Carboxylation at Lys-302 increases the catalytic activity of the enzyme. Is potently inhibited by N(alpha)-acetyl-N(delta)-phosphonoacetyl-L-ornithine (PALAO). Its function is as follows. Catalyzes the transfer of the carbamoyl group from carbamoyl phosphate to the delta-amino group of N(2)-acetyl-L-ornithine to produce N(2)-acetyl-L-citrulline. This is a step in an alternative arginine biosynthesis pathway. The enzyme has no activity with ornithine. This chain is N-acetylornithine carbamoyltransferase, found in Xanthomonas campestris pv. campestris (strain ATCC 33913 / DSM 3586 / NCPPB 528 / LMG 568 / P 25).